Consider the following 632-residue polypeptide: Probable extracellular metalloproteinase 2 (632 aa).

A signal peptide spans 1-19 (MHGLLLAGLAAALPLGVAG). Positions 20–244 (LPARQQSGLS…VHNVVDYVAS (225 aa)) are excised as a propeptide. N-linked (GlcNAc...) asparagine glycans are attached at residues asparagine 81 and asparagine 270. Histidine 429 provides a ligand contact to Zn(2+). Glutamate 430 is an active-site residue. A Zn(2+)-binding site is contributed by histidine 433.

Belongs to the peptidase M36 family. It depends on Zn(2+) as a cofactor.

The protein localises to the secreted. In terms of biological role, secreted metalloproteinase probably acting as a virulence factor. The sequence is that of Probable extracellular metalloproteinase 2 (MEP2) from Arthroderma benhamiae (strain ATCC MYA-4681 / CBS 112371) (Trichophyton mentagrophytes).